A 181-amino-acid chain; its full sequence is MSRKKKSRKPGAAGAPEFMVTRNRSESDVAGRLRKKDKKRKGLKAGGRNSEEGAQQKHGSSQVRDPRLGSKKKIPLIVEPAKKLTKQERRLSAEQELEMLENDAKLNVLLDRIESGENLGRGLQQYVDEKLDRIEQLMSQLGLLEPEAEEEFEDEAPVRKSRSDDDLLADFEDFDMDDYKG.

2 disordered regions span residues 1–75 (MSRK…KKIP) and 145–181 (EPEA…DYKG). The segment covering 32–43 (RLRKKDKKRKGL) has biased composition (basic residues). Acidic residues predominate over residues 146–155 (PEAEEEFEDE). The segment covering 156–165 (APVRKSRSDD) has biased composition (basic and acidic residues). A compositionally biased stretch (acidic residues) spans 166-181 (DLLADFEDFDMDDYKG).

The protein belongs to the YihI family. In terms of assembly, interacts with Der.

Its function is as follows. A GTPase-activating protein (GAP) that modifies Der/EngA GTPase function. May play a role in ribosome biogenesis. The polypeptide is Der GTPase-activating protein YihI (Vibrio vulnificus (strain YJ016)).